A 724-amino-acid chain; its full sequence is Transcription factor dcp-66 (724 aa).

2 stretches are compositionally biased toward polar residues: residues Met1–Met12 and Gly56–Pro70. 2 disordered regions span residues Met1–Leu23 and Asn55–Leu129. The segment covering Ala85 to Ile95 has biased composition (basic and acidic residues). Positions Asp105–Asn119 are enriched in acidic residues. Residues Glu186 to Met216 are a coiled coil. Disordered stretches follow at residues Lys328–Gln361 and Ala523–Gln590. Residues Ala332 to Gln358 are compositionally biased toward low complexity. 2 stretches are compositionally biased toward polar residues: residues Thr527–Ser541 and Ile551–Val564. Over residues Lys565–Gln590 the composition is skewed to low complexity.

Expressed at low levels in excretory cell, pharynx, vulva, and posterior neurons in adults. Strongly expressed in the excretory cell and more weakly in the pharynx in larva. Embryonic expression in the excretory cell.

Its subcellular location is the nucleus. Its function is as follows. Transcription factor which binds to the 5'-CCATACATTA-3' motif found in the promoter region of pgp-12 and activates its expression in the excretory cell. The sequence is that of Transcription factor dcp-66 from Caenorhabditis elegans.